Reading from the N-terminus, the 602-residue chain is Fructan 1-exohydrolase (602 aa).

Residues 1–19 (MAQAWAFLLLPVLLLSSYA) form the signal peptide. Asp-81 is an active-site residue. Residues Asn-174, Asn-242, and Asn-254 are each glycosylated (N-linked (GlcNAc...) asparagine). A disulfide bridge links Cys-452 with Cys-498.

It belongs to the glycosyl hydrolase 32 family. In terms of tissue distribution, detected in leaves, with maximum levels at the leaf tip.

The enzyme catalyses Hydrolysis of terminal, non-reducing (2-&gt;1)-linked beta-D-fructofuranose residues in fructans.. Inhibited by sucrose. Its function is as follows. Hydrolyzes inulin-type beta-(2,1)-fructans. Has low activity against beta-(2,6)-linked fructans. May play a role as a beta-(2,1)-trimmer during graminan biosynthesis. The protein is Fructan 1-exohydrolase of Bromus pictus (Patagonian grass).